A 38-amino-acid polypeptide reads, in one-letter code: Large ribosomal subunit protein bL36 (38 aa).

The protein belongs to the bacterial ribosomal protein bL36 family.

In Acinetobacter baylyi (strain ATCC 33305 / BD413 / ADP1), this protein is Large ribosomal subunit protein bL36.